The sequence spans 132 residues: Small ribosomal subunit protein uS8 (132 aa).

It belongs to the universal ribosomal protein uS8 family. In terms of assembly, part of the 30S ribosomal subunit. Contacts proteins S5 and S12.

In terms of biological role, one of the primary rRNA binding proteins, it binds directly to 16S rRNA central domain where it helps coordinate assembly of the platform of the 30S subunit. In Francisella philomiragia subsp. philomiragia (strain ATCC 25017 / CCUG 19701 / FSC 153 / O#319-036), this protein is Small ribosomal subunit protein uS8.